The sequence spans 367 residues: MLKLSCNVTDHIHNLFSNSRRIFVPVHRQTRPISCFQLKKEPLRAILSADHGNSSVRVADTVSGTSPADRLRFGRLMEDGFSYKEKFIVRSYEVGINKTATIETIANLLQEVACNHVQNVGFSTDGFATTLTMRKLHLIWVTARMHIEIYKYPAWSDVVEIETWCQSEGRIGTRRDWILKDCATGEVIGRATSKWVMMNQDTRRLQRVTDEVRDEYLVFCPPEPRLAFPEENNSSLKKIPKLEDPAQYSMLGLKPRRADLDMNQHVNNVTYIGWVLESIPQEIIDTHELKVITLDYRRECQQDDIVDSLTTSETPNEVVSKLTGTNGSTTSSKREHNESHFLHILRLSENGQEINRGRTQWRKKSSR.

The transit peptide at 1–48 directs the protein to the chloroplast; that stretch reads MLKLSCNVTDHIHNLFSNSRRIFVPVHRQTRPISCFQLKKEPLRAILS. Active-site residues include Asn-263, His-265, and Cys-300.

It belongs to the acyl-ACP thioesterase family.

The protein localises to the plastid. It localises to the chloroplast. It carries out the reaction (9Z)-octadecenoyl-[ACP] + H2O = (9Z)-octadecenoate + holo-[ACP] + H(+). Functionally, plays an essential role in chain termination during de novo fatty acid synthesis. Possesses high thioesterase activity for oleoyl-ACP versus other acyl-ACPs. The polypeptide is Oleoyl-acyl carrier protein thioesterase 2, chloroplastic (FATA2) (Arabidopsis thaliana (Mouse-ear cress)).